A 559-amino-acid chain; its full sequence is Excitatory amino acid transporter 5 (559 aa).

At 1–16 the chain is on the cytoplasmic side; that stretch reads MVLDAVLARGRTVCKH. 3 helical membrane passes run 17–37, 60–80, and 94–114; these read NGLLILSVLSVIVGCLLGFFL, MLKMLILPLVVSSLMSGLASL, and AYYLWTTFLAVVVGIIMVSII. The Extracellular portion of the chain corresponds to 115–215; sequence HPGGAAQKET…EIVYKSEPGT (101 aa). An N-linked (GlcNAc...) asparagine glycan is attached at asparagine 190. Residues 216–236 form a helical membrane-spanning segment; sequence SDGMNVLGIVIFSATMGIMLG. Asparagine 253 is a glycosylation site (N-linked (GlcNAc...) asparagine). 6 helical membrane passes run 259 to 279, 298 to 318, 329 to 349, 371 to 391, 413 to 433, and 456 to 476; these read IVAVAGWYFPFGIVFLIAGKI, TVVCGLVVHGLLILPLLYFLI, GVLQALLIALATSSSSATLPI, VGATINMDGTALYEAVAAIFI, AASIGAAGIPQAGLVTMVIVL, and FRTMINVLGDALAAGIMAHIC.

It belongs to the dicarboxylate/amino acid:cation symporter (DAACS) (TC 2.A.23) family. SLC1A7 subfamily. Interacts with the PDZ domains of DLG4. Expressed in retina, located in both cone and rod photoreceptor terminals and in axon terminals of rod bipolar cells.

The protein resides in the photoreceptor inner segment membrane. The protein localises to the synaptic cell membrane. It carries out the reaction K(+)(in) + L-glutamate(out) + 3 Na(+)(out) + H(+)(out) = K(+)(out) + L-glutamate(in) + 3 Na(+)(in) + H(+)(in). The catalysed reaction is K(+)(in) + L-aspartate(out) + 3 Na(+)(out) + H(+)(out) = K(+)(out) + L-aspartate(in) + 3 Na(+)(in) + H(+)(in). It catalyses the reaction D-aspartate(out) + K(+)(in) + 3 Na(+)(out) + H(+)(out) = D-aspartate(in) + K(+)(out) + 3 Na(+)(in) + H(+)(in). Its function is as follows. Sodium-dependent, high-affinity amino acid transporter that mediates the uptake of L-glutamate and also L-aspartate and D-aspartate. Functions as a symporter that transports one amino acid molecule together with two or three Na(+) ions and one proton, in parallel with the counter-transport of one K(+) ion. Acts primarily as an inhibitory glutamate-gated chloride channel being a major inhibitory presynaptic receptor at mammalian rod bipolar cell axon terminals. Glutamate binding gates a large Cl(-) conductance that mediates inhibition, affecting visual processing in the retina. This chain is Excitatory amino acid transporter 5, found in Mus musculus (Mouse).